We begin with the raw amino-acid sequence, 301 residues long: Homoserine O-acetyltransferase (301 aa).

Residue C142 is the Acyl-thioester intermediate of the active site. Residues K163 and S192 each coordinate substrate. The Proton acceptor role is filled by H235. The active site involves E237. A substrate-binding site is contributed by R249.

The protein belongs to the MetA family.

It localises to the cytoplasm. The catalysed reaction is L-homoserine + acetyl-CoA = O-acetyl-L-homoserine + CoA. It participates in amino-acid biosynthesis; L-methionine biosynthesis via de novo pathway; O-acetyl-L-homoserine from L-homoserine: step 1/1. Functionally, transfers an acetyl group from acetyl-CoA to L-homoserine, forming acetyl-L-homoserine. The polypeptide is Homoserine O-acetyltransferase (Novosphingobium aromaticivorans (strain ATCC 700278 / DSM 12444 / CCUG 56034 / CIP 105152 / NBRC 16084 / F199)).